Here is an 87-residue protein sequence, read N- to C-terminus: UPF0250 protein YE3006 (87 aa).

The protein belongs to the UPF0250 family.

The polypeptide is UPF0250 protein YE3006 (Yersinia enterocolitica serotype O:8 / biotype 1B (strain NCTC 13174 / 8081)).